The chain runs to 367 residues: Pre-small/secreted glycoprotein (367 aa).

The N-terminal stretch at 1 to 33 is a signal peptide; sequence MGSGYQLLQLPRERFRKTSFLVWVIILFQRAIS. N-linked (GlcNAc...) asparagine; by host glycosylation is present at asparagine 41. 2 disulfide bridges follow: cysteine 109–cysteine 136 and cysteine 122–cysteine 148. Asparagine 205, asparagine 239, asparagine 258, and asparagine 269 each carry an N-linked (GlcNAc...) asparagine; by host glycan.

This sequence belongs to the filoviruses glycoprotein family. Homodimer; disulfide-linked. The homodimers are linked by two disulfide bonds in a parallel orientation. As to quaternary structure, monomer. In terms of processing, this precursor is processed into mature sGP and delta-peptide by host furin or furin-like proteases. The cleavage site corresponds to the furin optimal cleavage sequence [KR]-X-[KR]-R. Post-translationally, N-glycosylated. O-glycosylated.

The protein localises to the secreted. Its function is as follows. Seems to possess an anti-inflammatory activity as it can reverse the barrier-decreasing effects of TNF alpha. Might therefore contribute to the lack of inflammatory reaction seen during infection in spite the of extensive necrosis and massive virus production. Does not seem to be involved in activation of primary macrophages. Does not seem to interact specifically with neutrophils. In terms of biological role, viroporin that permeabilizes mammalian cell plasma membranes. It acts by altering permeation of ionic compounds and small molecules. This activity may lead to viral enterotoxic activity. The polypeptide is Pre-small/secreted glycoprotein (GP) (Reston ebolavirus (strain Philippines-96) (REBOV)).